The chain runs to 276 residues: Radial spoke head protein 9 homolog (276 aa).

It belongs to the flagellar radial spoke RSP9 family. Component of the axonemal radial spoke 1 (RS1) and 2 (RS2) complexes, at least composed of spoke head proteins RSPH1, RSPH3, RSPH9 and the cilia-specific component RSPH4A or sperm-specific component RSPH6A, spoke stalk proteins RSPH14, DNAJB13, DYDC1, ROPN1L and NME5, and the RS1 complex-specific anchor protein IQUB. Interacts with IQUB. Interacts with RSPH3B. Interacts with RSPH4A. Interacts with RSPH6A. Interacts with CFAP61. Interacts with LRRC23. Expressed in the testis, trachea, lung, oviduct and ependymal cells (at protein level).

The protein resides in the cytoplasm. It localises to the cytoskeleton. It is found in the cilium axoneme. The protein localises to the flagellum axoneme. Its subcellular location is the cell projection. The protein resides in the kinocilium. Functions as part of axonemal radial spoke complexes that play an important part in the motility of sperm and cilia. Essential for both the radial spoke head assembly and the central pair microtubule stability in ependymal motile cilia. Required for motility of olfactory and neural cilia and for the structural integrity of ciliary axonemes in both 9+0 and 9+2 motile cilia. This Mus musculus (Mouse) protein is Radial spoke head protein 9 homolog (Rsph9).